The sequence spans 304 residues: tRNA uridine(34) hydroxylase (304 aa).

One can recognise a Rhodanese domain in the interval 124 to 219 (QDEETLLIDT…YLETIPKEDS (96 aa)). The active-site Cysteine persulfide intermediate is the cysteine 179.

This sequence belongs to the TrhO family.

It catalyses the reaction uridine(34) in tRNA + AH2 + O2 = 5-hydroxyuridine(34) in tRNA + A + H2O. Catalyzes oxygen-dependent 5-hydroxyuridine (ho5U) modification at position 34 in tRNAs. The sequence is that of tRNA uridine(34) hydroxylase from Bartonella henselae (strain ATCC 49882 / DSM 28221 / CCUG 30454 / Houston 1) (Rochalimaea henselae).